The following is a 343-amino-acid chain: Dihydroorotate dehydrogenase (quinone) (343 aa).

Residues Ala58–Lys62 and Ser82 each bind FMN. A substrate-binding site is contributed by Lys62. A substrate-binding site is contributed by Asn107–Phe111. Residues Asn136 and Asn167 each coordinate FMN. Asn167 is a substrate binding site. Ser170 acts as the Nucleophile in catalysis. Asn172 is a substrate binding site. Positions 206 and 234 each coordinate FMN. Asn235–Thr236 is a binding site for substrate. Residues Gly256, Gly285, and Tyr306 to Ser307 each bind FMN.

Belongs to the dihydroorotate dehydrogenase family. Type 2 subfamily. Monomer. Requires FMN as cofactor.

It is found in the cell membrane. It carries out the reaction (S)-dihydroorotate + a quinone = orotate + a quinol. It participates in pyrimidine metabolism; UMP biosynthesis via de novo pathway; orotate from (S)-dihydroorotate (quinone route): step 1/1. Its function is as follows. Catalyzes the conversion of dihydroorotate to orotate with quinone as electron acceptor. The chain is Dihydroorotate dehydrogenase (quinone) from Erythrobacter litoralis (strain HTCC2594).